The chain runs to 255 residues: MLQISHLYADYGGKPVLEDINLTLESGELLVVLGPSGCGKTTLLNLIAGFVPYQHGSIQLAGKRIEGPGAERGVVFQNEGLLPWRNVQDNVAFGLQLAGIEKMQRLEIAHQMLKKVGLEGAEKRYIWQLSGGQRQRVGIARALAANPQLLLLDEPFGALDAFTRDQMQTLLLKLWQETGKQVLLITHDIEEAVFMATELVLLSPGPGRVLERLPLNFARRFVAGESSRSIKSDPQFIAMREYVLSRVFEQREAFS.

The ABC transporter domain occupies leucine 2–serine 229. An ATP-binding site is contributed by glycine 34–threonine 41.

The protein belongs to the ABC transporter superfamily. Taurine importer (TC 3.A.1.17.1) family. In terms of assembly, the complex is composed of two ATP-binding proteins (TauB), two transmembrane proteins (TauC) and a solute-binding protein (TauA).

Its subcellular location is the cell inner membrane. It catalyses the reaction taurine(out) + ATP + H2O = taurine(in) + ADP + phosphate + H(+). Functionally, part of the ABC transporter complex TauABC involved in taurine import. Responsible for energy coupling to the transport system. The polypeptide is Taurine import ATP-binding protein TauB (Escherichia coli O157:H7).